The chain runs to 768 residues: MLKAPFLPIRDLVIFPNVVTPIYVGRANSIATLEKAIANKTKLVLGLQKDASQENPTFDGDIYEVGVIANIVQIIRMPNNNIKVLVEAEDRVKIKNIEKEENEYVTTYTVIKETLKDSKETEAIYRKVFTRFEKYVSMIGKFSSELILNLKKIEDYSNGLDIMASNLNISSEKKQEILEISNVRDRGYRILDEIVAEMEIASLEKTIDDKVKNKMNEAQRAYYLKEKISVMKEELGDFSQDDDVIEIVDRLKNTELPKEVREKLEAEVKKLTKMQPFSAESSVIRNYIEAVLELPWNSETNDVLDLKKASQILERDHYGLKDAKEKVLDYLAVKKLNPSMNGVILCLSGPPGIGKTSLVKSIAESMGRKFVRVSLGGVRDEAEIRGHRRTYVGSMPGKIMKAMKEAGTNNPVMLLDEIDKMSNDFKGDPASAMLEVLDPEQNKNFEDHYIDMPFDLSKVFFVATANDLRNVSAPLRDRMDILQLSSYTEFEKLHIAQKFLLKQAQKENGLANIDIKIPDKVMFKLIDEYTREAGVRNLKREIITICRKLAREVVEKDTKKFNLKPTDLEKYLGKAKFRPEKSRKATGKIGVVNGLAWTAVGGVTLDVQGVDTPGKGEVTLTGTLGNVMKESASVAMTYVKANLKKYPPKDKDFFKDRTIHLHFPEGATPKDGPSAGITITTAIVSVLTNKKVRQDIAMTGEITITGDVLAIGGVREKVIGAHRAGIKEVILPEDNRVDTDEIPDELKSTMKIHFAKTYDDVSKLVFVK.

Residues 4–198 (APFLPIRDLV…RILDEIVAEM (195 aa)) enclose the Lon N-terminal domain. Residue 349 to 356 (GPPGIGKT) coordinates ATP. The 183-residue stretch at 586–768 (TGKIGVVNGL…DDVSKLVFVK (183 aa)) folds into the Lon proteolytic domain. Residues serine 674 and lysine 717 contribute to the active site.

It belongs to the peptidase S16 family. As to quaternary structure, homohexamer. Organized in a ring with a central cavity.

Its subcellular location is the cytoplasm. It carries out the reaction Hydrolysis of proteins in presence of ATP.. In terms of biological role, ATP-dependent serine protease that mediates the selective degradation of mutant and abnormal proteins as well as certain short-lived regulatory proteins. Required for cellular homeostasis and for survival from DNA damage and developmental changes induced by stress. Degrades polypeptides processively to yield small peptide fragments that are 5 to 10 amino acids long. Binds to DNA in a double-stranded, site-specific manner. The sequence is that of Lon protease from Fusobacterium nucleatum subsp. nucleatum (strain ATCC 25586 / DSM 15643 / BCRC 10681 / CIP 101130 / JCM 8532 / KCTC 2640 / LMG 13131 / VPI 4355).